Reading from the N-terminus, the 395-residue chain is Elongation factor Tu (395 aa).

Positions 10–204 (KEHANIGTIG…AVDDFIPTPE (195 aa)) constitute a tr-type G domain. Residues 19–26 (GHVDHGKT) form a G1 region. 19-26 (GHVDHGKT) serves as a coordination point for GTP. T26 contributes to the Mg(2+) binding site. A G2 region spans residues 60–64 (GITIN). The segment at 81–84 (DCPG) is G3. GTP contacts are provided by residues 81–85 (DCPGH) and 136–139 (NKVD). The interval 136-139 (NKVD) is G4. The segment at 174–176 (SAL) is G5.

It belongs to the TRAFAC class translation factor GTPase superfamily. Classic translation factor GTPase family. EF-Tu/EF-1A subfamily. As to quaternary structure, monomer.

It localises to the cytoplasm. It carries out the reaction GTP + H2O = GDP + phosphate + H(+). Functionally, GTP hydrolase that promotes the GTP-dependent binding of aminoacyl-tRNA to the A-site of ribosomes during protein biosynthesis. The sequence is that of Elongation factor Tu from Staphylococcus saprophyticus subsp. saprophyticus (strain ATCC 15305 / DSM 20229 / NCIMB 8711 / NCTC 7292 / S-41).